The primary structure comprises 322 residues: PI-PLC X domain-containing protein 3 (322 aa).

Residues 22–197 form the PI-PLC X-box domain; it reads TLHGIPLTNL…EYQVLVFYHN (176 aa). Active-site residues include H37 and H114.

This chain is PI-PLC X domain-containing protein 3 (plcxd3), found in Danio rerio (Zebrafish).